The primary structure comprises 154 residues: Large ribosomal subunit protein uL13 (154 aa).

The protein belongs to the universal ribosomal protein uL13 family. Part of the 50S ribosomal subunit.

This protein is one of the early assembly proteins of the 50S ribosomal subunit, although it is not seen to bind rRNA by itself. It is important during the early stages of 50S assembly. This is Large ribosomal subunit protein uL13 from Rhizobium etli (strain ATCC 51251 / DSM 11541 / JCM 21823 / NBRC 15573 / CFN 42).